The following is a 256-amino-acid chain: MVKSHIGSWILVLFVAMWSDVGLCKKRPKPGGGWNTGGSRYPGQGSPGGNRYPPQGGGGWGQPHGGGWGQPHGGGWGQPHGGGWGQPHGGGGWGQGGSHSQWNKPSKPKTNMKHVAGAAAAGAVVGGLGGYMLGSAMSRPLIHFGNDYEDRYYRENMYRYPNQVYYRPVDQYSNQNNFVHDCVNITVKQHTVTTTTKGENFTETDIKIMERVVEQMCITQYQRESQAYYQRGASVILFSPPPVILLISFLIFLIVG.

The first 24 residues, 1–24, serve as a signal peptide directing secretion; that stretch reads MVKSHIGSWILVLFVAMWSDVGLC. The interval 25 to 233 is interaction with GRB2, ERI3 and SYN1; that stretch reads KKRPKPGGGW…ESQAYYQRGA (209 aa). Positions 28 to 110 are disordered; the sequence is PKPGGGWNTG…QWNKPSKPKT (83 aa). 5 tandem repeats follow at residues 54–62, 63–70, 71–78, 79–86, and 87–95. The interval 54–95 is 5 X 8 AA tandem repeats of P-H-G-G-G-W-G-Q; it reads PQGGGGWGQPHGGGWGQPHGGGWGQPHGGGWGQPHGGGGWGQ. The span at 55-97 shows a compositional bias: gly residues; that stretch reads QGGGGWGQPHGGGWGQPHGGGWGQPHGGGWGQPHGGGGWGQGG. Cu(2+)-binding residues include His-64, Gly-65, Gly-66, His-72, Gly-73, Gly-74, His-80, Gly-81, Gly-82, His-88, Gly-90, and Gly-91. Cys-182 and Cys-217 are joined by a disulfide. Asn-184 and Asn-200 each carry an N-linked (GlcNAc...) asparagine glycan. Ala-233 is lipidated: GPI-anchor amidated alanine. Positions 234 to 256 are cleaved as a propeptide — removed in mature form; the sequence is SVILFSPPPVILLISFLIFLIVG.

Belongs to the prion family. As to quaternary structure, monomer and homodimer. Has a tendency to aggregate into amyloid fibrils containing a cross-beta spine, formed by a steric zipper of superposed beta-strands. Soluble oligomers may represent an intermediate stage on the path to fibril formation. Copper binding may promote oligomerization. Interacts with GRB2, APP, ERI3/PRNPIP and SYN1. Mislocalized cytosolically exposed PrP interacts with MGRN1; this interaction alters MGRN1 subcellular location and causes lysosomal enlargement. Interacts with KIAA1191.

The protein resides in the cell membrane. It is found in the golgi apparatus. Its function is as follows. Its primary physiological function is unclear. Has cytoprotective activity against internal or environmental stresses. May play a role in neuronal development and synaptic plasticity. May be required for neuronal myelin sheath maintenance. May play a role in iron uptake and iron homeostasis. Soluble oligomers are toxic to cultured neuroblastoma cells and induce apoptosis (in vitro). Association with GPC1 (via its heparan sulfate chains) targets PRNP to lipid rafts. Also provides Cu(2+) or Zn(2+) for the ascorbate-mediated GPC1 deaminase degradation of its heparan sulfate side chains. The protein is Major prion protein (PRNP) of Capra hircus (Goat).